The following is a 510-amino-acid chain: Protein fork head (510 aa).

Disordered regions lie at residues 1–62 (MQKL…SPLA) and 175–205 (AMPP…YRRS). The span at 20 to 39 (SGGGGPPSGGGGGGGGGGGG) shows a compositional bias: gly residues. Low complexity predominate over residues 47 to 60 (NNPNPTSNGGSMSP). 2 positions are modified to phosphoserine: Ser-187 and Ser-190. Residues 209–300 (AKPPYSYISL…GNMFENGCYL (92 aa)) constitute a DNA-binding region (fork-head). The segment at 309–359 (EKKEAIRQLHKSPSHSSLEATSPGKKDHEDSHHMHHHHHSRLDHHQHHKEA) is disordered. Ser-320, Ser-322, and Ser-330 each carry phosphoserine. Over residues 341–356 (HMHHHHHSRLDHHQHH) the composition is skewed to basic residues.

It is found in the nucleus. Functionally, fkh promotes terminal as opposed to segmental development. In the absence of fkh, this developmental switch does not occur. The nuclear localization of the fkh protein suggest that fkh regulates the transcription of other, subordinate, genes. This Drosophila melanogaster (Fruit fly) protein is Protein fork head (fkh).